We begin with the raw amino-acid sequence, 343 residues long: Holliday junction branch migration complex subunit RuvB (343 aa).

The large ATPase domain (RuvB-L) stretch occupies residues 1–178 (MNFVQQNREG…FGMILELQFY (178 aa)). Residues Leu-17, Arg-18, Gly-59, Lys-62, Thr-63, Thr-64, 125–127 (EDY), Arg-168, Tyr-178, and Arg-215 contribute to the ATP site. Thr-63 serves as a coordination point for Mg(2+). The small ATPAse domain (RuvB-S) stretch occupies residues 179 to 249 (TVKELMEIIK…LVEKTMDILE (71 aa)). A head domain (RuvB-H) region spans residues 252 to 343 (KLGLDEMDRK…DESLRKSDES (92 aa)). Arg-307 and Arg-312 together coordinate DNA.

Belongs to the RuvB family. As to quaternary structure, homohexamer. Forms an RuvA(8)-RuvB(12)-Holliday junction (HJ) complex. HJ DNA is sandwiched between 2 RuvA tetramers; dsDNA enters through RuvA and exits via RuvB. An RuvB hexamer assembles on each DNA strand where it exits the tetramer. Each RuvB hexamer is contacted by two RuvA subunits (via domain III) on 2 adjacent RuvB subunits; this complex drives branch migration. In the full resolvosome a probable DNA-RuvA(4)-RuvB(12)-RuvC(2) complex forms which resolves the HJ.

Its subcellular location is the cytoplasm. It catalyses the reaction ATP + H2O = ADP + phosphate + H(+). The RuvA-RuvB-RuvC complex processes Holliday junction (HJ) DNA during genetic recombination and DNA repair, while the RuvA-RuvB complex plays an important role in the rescue of blocked DNA replication forks via replication fork reversal (RFR). RuvA specifically binds to HJ cruciform DNA, conferring on it an open structure. The RuvB hexamer acts as an ATP-dependent pump, pulling dsDNA into and through the RuvAB complex. RuvB forms 2 homohexamers on either side of HJ DNA bound by 1 or 2 RuvA tetramers; 4 subunits per hexamer contact DNA at a time. Coordinated motions by a converter formed by DNA-disengaged RuvB subunits stimulates ATP hydrolysis and nucleotide exchange. Immobilization of the converter enables RuvB to convert the ATP-contained energy into a lever motion, pulling 2 nucleotides of DNA out of the RuvA tetramer per ATP hydrolyzed, thus driving DNA branch migration. The RuvB motors rotate together with the DNA substrate, which together with the progressing nucleotide cycle form the mechanistic basis for DNA recombination by continuous HJ branch migration. Branch migration allows RuvC to scan DNA until it finds its consensus sequence, where it cleaves and resolves cruciform DNA. The polypeptide is Holliday junction branch migration complex subunit RuvB (Pseudothermotoga lettingae (strain ATCC BAA-301 / DSM 14385 / NBRC 107922 / TMO) (Thermotoga lettingae)).